Here is a 66-residue protein sequence, read N- to C-terminus: Large ribosomal subunit protein bL33c (66 aa).

The protein belongs to the bacterial ribosomal protein bL33 family.

Its subcellular location is the plastid. It is found in the chloroplast. This Oryza nivara (Indian wild rice) protein is Large ribosomal subunit protein bL33c.